Reading from the N-terminus, the 225-residue chain is MEASGSSSQSQDSGGVHRETEDHYQETELHKHHGKARERYKRDKSSSSSSSSSSSSSSSSSSSSSSSDSSDEDQPSRGPRKHRRRPRRDSLRGADHGELEVLKDELQLCGGAAGEMVPTGESGLRRRGSGSAEGEVEASQLRRLNIKKDDEFFHFVLLCFAIGALLVCYHYYADWFMSLGVGLLTFASLETIGIYFGLVYRIHSVLQGFIPLLQKFRLPGFRRTN.

Met1 is subject to N-acetylmethionine. A compositionally biased stretch (low complexity) spans 1–14 (MEASGSSSQSQDSG). Residues 1–96 (MEASGSSSQS…RRDSLRGADH (96 aa)) are disordered. The span at 15-29 (GVHRETEDHYQETEL) shows a compositional bias: basic and acidic residues. The span at 30 to 39 (HKHHGKARER) shows a compositional bias: basic residues. Positions 46–68 (SSSSSSSSSSSSSSSSSSSSSSD) are enriched in low complexity. Residues 78–87 (GPRKHRRRPR) are compositionally biased toward basic residues. Ser129 bears the Phosphoserine mark. 2 consecutive transmembrane segments (helical) span residues 152 to 172 (FFHFVLLCFAIGALLVCYHYY) and 179 to 199 (LGVGLLTFASLETIGIYFGLV).

The protein resides in the membrane. This Mus musculus (Mouse) protein is Transmembrane protein 40 (Tmem40).